We begin with the raw amino-acid sequence, 478 residues long: Ribosomal RNA small subunit methyltransferase F (478 aa).

S-adenosyl-L-methionine is bound by residues 121-127 (ASAPGSK), Glu145, Asp172, and Asp190. The active-site Nucleophile is Cys243.

It belongs to the class I-like SAM-binding methyltransferase superfamily. RsmB/NOP family.

It is found in the cytoplasm. The catalysed reaction is cytidine(1407) in 16S rRNA + S-adenosyl-L-methionine = 5-methylcytidine(1407) in 16S rRNA + S-adenosyl-L-homocysteine + H(+). Its function is as follows. Specifically methylates the cytosine at position 1407 (m5C1407) of 16S rRNA. This is Ribosomal RNA small subunit methyltransferase F from Shewanella sediminis (strain HAW-EB3).